We begin with the raw amino-acid sequence, 255 residues long: Thiazole synthase (255 aa).

The Schiff-base intermediate with DXP role is filled by Lys96. Residues Gly157, 183–184 (AG), and 205–206 (NT) each bind 1-deoxy-D-xylulose 5-phosphate.

Belongs to the ThiG family. In terms of assembly, homotetramer. Forms heterodimers with either ThiH or ThiS.

The protein localises to the cytoplasm. The catalysed reaction is [ThiS sulfur-carrier protein]-C-terminal-Gly-aminoethanethioate + 2-iminoacetate + 1-deoxy-D-xylulose 5-phosphate = [ThiS sulfur-carrier protein]-C-terminal Gly-Gly + 2-[(2R,5Z)-2-carboxy-4-methylthiazol-5(2H)-ylidene]ethyl phosphate + 2 H2O + H(+). It participates in cofactor biosynthesis; thiamine diphosphate biosynthesis. Its function is as follows. Catalyzes the rearrangement of 1-deoxy-D-xylulose 5-phosphate (DXP) to produce the thiazole phosphate moiety of thiamine. Sulfur is provided by the thiocarboxylate moiety of the carrier protein ThiS. In vitro, sulfur can be provided by H(2)S. This chain is Thiazole synthase, found in Geobacillus thermodenitrificans (strain NG80-2).